The primary structure comprises 206 residues: Small ribosomal subunit protein uS4 (206 aa).

The S4 RNA-binding domain maps to 96-157 (SRLDNVVYRM…KAQKQLRVQA (62 aa)).

The protein belongs to the universal ribosomal protein uS4 family. In terms of assembly, part of the 30S ribosomal subunit. Contacts protein S5. The interaction surface between S4 and S5 is involved in control of translational fidelity.

One of the primary rRNA binding proteins, it binds directly to 16S rRNA where it nucleates assembly of the body of the 30S subunit. Its function is as follows. With S5 and S12 plays an important role in translational accuracy. This chain is Small ribosomal subunit protein uS4, found in Alkalilimnicola ehrlichii (strain ATCC BAA-1101 / DSM 17681 / MLHE-1).